The primary structure comprises 216 residues: 3-isopropylmalate dehydratase small subunit (216 aa).

The protein belongs to the LeuD family. LeuD type 1 subfamily. Heterodimer of LeuC and LeuD.

It carries out the reaction (2R,3S)-3-isopropylmalate = (2S)-2-isopropylmalate. The protein operates within amino-acid biosynthesis; L-leucine biosynthesis; L-leucine from 3-methyl-2-oxobutanoate: step 2/4. Its function is as follows. Catalyzes the isomerization between 2-isopropylmalate and 3-isopropylmalate, via the formation of 2-isopropylmaleate. The chain is 3-isopropylmalate dehydratase small subunit from Burkholderia ambifaria (strain MC40-6).